Reading from the N-terminus, the 62-residue chain is uncharacterized protein (62 aa).

Over residues 1 to 13 the composition is skewed to polar residues; that stretch reads MGESKSPQESSSE. Residues 1 to 62 are disordered; the sequence is MGESKSPQES…SRREFRRKSG (62 aa). Residues 14-28 are compositionally biased toward basic and acidic residues; the sequence is GETKRKFREALDRKM.

This is an uncharacterized protein from Mycobacterium tuberculosis (strain ATCC 25618 / H37Rv).